The following is a 341-amino-acid chain: tRNA N6-adenosine threonylcarbamoyltransferase (341 aa).

Fe cation contacts are provided by histidine 111 and histidine 115. Substrate is bound by residues 134–138 (LVSGG), aspartate 167, glycine 180, and asparagine 272. Aspartate 300 is a Fe cation binding site.

Belongs to the KAE1 / TsaD family. Requires Fe(2+) as cofactor.

The protein localises to the cytoplasm. The enzyme catalyses L-threonylcarbamoyladenylate + adenosine(37) in tRNA = N(6)-L-threonylcarbamoyladenosine(37) in tRNA + AMP + H(+). In terms of biological role, required for the formation of a threonylcarbamoyl group on adenosine at position 37 (t(6)A37) in tRNAs that read codons beginning with adenine. Is involved in the transfer of the threonylcarbamoyl moiety of threonylcarbamoyl-AMP (TC-AMP) to the N6 group of A37, together with TsaE and TsaB. TsaD likely plays a direct catalytic role in this reaction. This is tRNA N6-adenosine threonylcarbamoyltransferase from Edwardsiella ictaluri (strain 93-146).